Consider the following 148-residue polypeptide: SsrA-binding protein (148 aa).

It belongs to the SmpB family.

Its subcellular location is the cytoplasm. Its function is as follows. Required for rescue of stalled ribosomes mediated by trans-translation. Binds to transfer-messenger RNA (tmRNA), required for stable association of tmRNA with ribosomes. tmRNA and SmpB together mimic tRNA shape, replacing the anticodon stem-loop with SmpB. tmRNA is encoded by the ssrA gene; the 2 termini fold to resemble tRNA(Ala) and it encodes a 'tag peptide', a short internal open reading frame. During trans-translation Ala-aminoacylated tmRNA acts like a tRNA, entering the A-site of stalled ribosomes, displacing the stalled mRNA. The ribosome then switches to translate the ORF on the tmRNA; the nascent peptide is terminated with the 'tag peptide' encoded by the tmRNA and targeted for degradation. The ribosome is freed to recommence translation, which seems to be the essential function of trans-translation. The protein is SsrA-binding protein of Azoarcus sp. (strain BH72).